The following is a 286-amino-acid chain: MAGAKEIRSKIASIKSTQKITNAMEKVAVSKMRKAQMRMAAGRPYAERIRQVIGHLANANPEYRHPFMVEREVKRVGYIVVSSDRGLCGGLNINLFKSLVKDMSGYREQGAEIDLCVIGSKGASFFRSFGGNVVAAISHLGEEPSINDLIGSVKVMLDAYLEGRIDRLFVVSNKFVNTMTQKPTVEQLIPLVADDDQELKHHWDYLYEPDAKSLLDGLLVRYVESQVYQAVVENNACEQAARMIAMKNATDNAGELISDLQLIYNKARQAAITQEISEIVGGAAAV.

The protein belongs to the ATPase gamma chain family. As to quaternary structure, F-type ATPases have 2 components, CF(1) - the catalytic core - and CF(0) - the membrane proton channel. CF(1) has five subunits: alpha(3), beta(3), gamma(1), delta(1), epsilon(1). CF(0) has three main subunits: a, b and c.

It is found in the cell inner membrane. Functionally, produces ATP from ADP in the presence of a proton gradient across the membrane. The gamma chain is believed to be important in regulating ATPase activity and the flow of protons through the CF(0) complex. This is ATP synthase gamma chain from Pseudomonas aeruginosa (strain UCBPP-PA14).